The chain runs to 68 residues: Riparin-1.6 (68 aa).

The N-terminal stretch at 1-15 (MKIIVFLAVLMLVSA) is a signal peptide. The propeptide occupies 16–41 (QVCLVSAAEMEHSSDNELSSRDLVKR). A disulfide bridge links cysteine 47 with cysteine 53. Cysteine 53 is modified (cysteine amide). The propeptide occupies 57–68 (DIESSEGANGGE).

In terms of tissue distribution, expressed by the skin glands.

The protein resides in the secreted. The protein is Riparin-1.6 of Crinia riparia (Streambank froglet).